A 351-amino-acid polypeptide reads, in one-letter code: Anthranilate phosphoribosyltransferase (351 aa).

Residues Gly-89, 92–93 (GD), Thr-97, 99–102 (NIST), 117–125 (KHGNRSASG), and Ser-129 contribute to the 5-phospho-alpha-D-ribose 1-diphosphate site. Position 89 (Gly-89) interacts with anthranilate. Mg(2+) is bound at residue Ser-101. Position 120 (Asn-120) interacts with anthranilate. Arg-175 is an anthranilate binding site. Mg(2+)-binding residues include Asp-234 and Glu-235.

It belongs to the anthranilate phosphoribosyltransferase family. Homodimer. It depends on Mg(2+) as a cofactor.

It carries out the reaction N-(5-phospho-beta-D-ribosyl)anthranilate + diphosphate = 5-phospho-alpha-D-ribose 1-diphosphate + anthranilate. Its pathway is amino-acid biosynthesis; L-tryptophan biosynthesis; L-tryptophan from chorismate: step 2/5. Its function is as follows. Catalyzes the transfer of the phosphoribosyl group of 5-phosphorylribose-1-pyrophosphate (PRPP) to anthranilate to yield N-(5'-phosphoribosyl)-anthranilate (PRA). The polypeptide is Anthranilate phosphoribosyltransferase (Synechococcus sp. (strain CC9902)).